A 514-amino-acid chain; its full sequence is Na(+)/H(+) antiporter NhaB (514 aa).

11 helical membrane-spanning segments follow: residues 13-33 (FMGN…IINP), 34-54 (LIFF…EFIF), 96-116 (VILL…LLLF), 136-156 (CFAS…AVVI), 203-223 (LMMH…VGEP), 236-256 (FVTF…AGLA), 304-324 (ALIG…VGII), 349-369 (EEAL…AVII), 392-412 (LFYL…VGTV), 448-468 (ATPN…SPLI), and 479-499 (ALPY…FWLV).

The protein belongs to the NhaB Na(+)/H(+) (TC 2.A.34) antiporter family.

The protein localises to the cell inner membrane. It catalyses the reaction 2 Na(+)(in) + 3 H(+)(out) = 2 Na(+)(out) + 3 H(+)(in). Functionally, na(+)/H(+) antiporter that extrudes sodium in exchange for external protons. The chain is Na(+)/H(+) antiporter NhaB from Proteus mirabilis (strain HI4320).